The following is a 23-amino-acid chain: Brevinin-1Eb (23 aa).

C17 and C23 form a disulfide bridge.

It belongs to the frog skin active peptide (FSAP) family. Brevinin subfamily. In terms of tissue distribution, expressed by the skin glands.

The protein localises to the secreted. In terms of biological role, shows antibacterial activity against representative Gram-negative and Gram-positive bacterial species, and a very high hemolytic activity. The protein is Brevinin-1Eb of Pelophylax lessonae (Pool frog).